The sequence spans 168 residues: Pleiotrophin (168 aa).

An N-terminal signal peptide occupies residues 1–32; the sequence is MSSQQYQQQRRKFAAAFLALIFILAAVDTAEA. 5 disulfide bridges follow: Cys-47-Cys-76, Cys-55-Cys-85, Cys-62-Cys-89, Cys-99-Cys-131, and Cys-109-Cys-141. Chondroitin sulfate binding stretches follow at residues 92 to 99 and 123 to 131; these read KKQFGAEC and KRALHNADC. Positions 139–168 are disordered; sequence KPCGKLTKPKPQAESKKKKKEGKKQEKMLD. The tract at residues 147–168 is chondroitin sulfate A binding; sequence PKPQAESKKKKKEGKKQEKMLD.

Belongs to the pleiotrophin family. As to quaternary structure, interacts with ALK and NEK6. Interacts with PTPRZ1 (via chondroitin sulfate groups); promotes formation of homooligomers; oligomerization impairs tyrosine phosphatase activity. Forms a complex with PTPRZ1 and CTNNB1; this complex inactivates PTPRZ1 protein tyrosine phosphatase activity through PTN interaction and stimulates tyrosine phosphorylation of CTNNB1. Interacts with ITGB3 and ITGA5. Forms a complex with PTPRZ1 and integrin alpha-V/beta-3 (ITGAV:ITGB3) that stimulates endothelial cell migration through ITGB3 'Tyr-773' phosphorylation. Interacts with SDC3 (via heparan sulfate chains); this interaction mediates the neurite outgrowth-promoting signal from PTN to the cytoskeleton of growing neurites; this interaction mediates osteoblast recruitment. Interacts with GPC2 (via heparan sulfate); this interaction promotes neurite outgrowth through binding of PTN with chondroitin sulfate of proteoglycans, thereby releasing PTPRS of chondroitin sulfate proteoglycans (CSPGs) and leading to binding with heparan sulfate of GPC2. Post-translationally, phosphorylated by NEK6. As to expression, osteoblast and brain. Expressed in the follicular epithelium and granulosa cells of the ovary. Strongly expressed in the uterus of newborn mice, and the degree of expression decreased in one-week-old mice, although the expression continues even in the uteri of adult mice. Expression gradually increases from proestrus to estrus, then decreases sharply, and thereafter gradually increased again. strongly expressed in the cochlea of WT mice 1 week after birth, and then the expression decreased and was undetectable by week 8 after birth. Expressed around the cell soma of osteocytes and apparently captured in the unmineralized interstitial matrix surrounding the cells. Furthermore distributed throughout the intraosseous canalicular porosity, being localized in the unmineralized matrix around the cell processes. Strongly expressed in the innermost layer of the periosteum.

The protein resides in the secreted. Functionally, secreted growth factor that mediates its signal through cell-surface proteoglycan and non-proteoglycan receptors. Binds cell-surface proteoglycan receptor via their chondroitin sulfate (CS) groups. Thereby regulates many processes like cell proliferation, cell survival, cell growth, cell differentiation and cell migration in several tissues namely neuron and bone. Also plays a role in synaptic plasticity and learning-related behavior by inhibiting long-term synaptic potentiation. Binds PTPRZ1, leading to neutralization of the negative charges of the CS chains of PTPRZ1, inducing PTPRZ1 clustering, thereby causing the dimerization and inactivation of its phosphatase activity leading to increased tyrosine phosphorylation of each of the PTPRZ1 substrates like ALK or AFAP1L2 in order to activate the PI3K-AKT pathway. Through PTPRZ1 binding controls oligodendrocyte precursor cell differentiation by enhancing the phosphorylation of AFAP1L2 in order to activate the PI3K-AKT pathway. Forms a complex with PTPRZ1 and integrin alpha-V/beta-3 (ITGAV:ITGB3) that stimulates endothelial cell migration through SRC dephosphorylation and activation that consequently leads to ITGB3 'Tyr-773' phosphorylation. In adult hippocampus promotes dendritic arborization, spine development, and functional integration and connectivity of newborn granule neurons through ALK by activating AKT signaling pathway. Binds GPC2 and chondroitin sulfate proteoglycans (CSPGs) at the neuron surface, leading to abrogation of binding between PTPRS and CSPGs and neurite outgrowth promotion. Binds SDC3 and mediates bone formation by recruiting and attaching osteoblasts/osteoblast precursors to the sites for new bone deposition. Binds ALK and promotes cell survival and cell proliferation through MAPK pathway activation. Inhibits proliferation and enhances differentiation of neural stem cells by inhibiting FGF2-induced fibroblast growth factor receptor signaling pathway. Mediates regulatory mechanisms in normal hemostasis and in hematopoietic regeneration and in maintaining the balance of myeloid and lymphoid regeneration. In addition may play a role in the female reproductive system, auditory response and the progesterone-induced decidualization pathway. In Mus musculus (Mouse), this protein is Pleiotrophin.